A 156-amino-acid polypeptide reads, in one-letter code: Endoribonuclease YbeY (156 aa).

Zn(2+) is bound by residues His-122, His-126, and His-132.

It belongs to the endoribonuclease YbeY family. It depends on Zn(2+) as a cofactor.

The protein localises to the cytoplasm. In terms of biological role, single strand-specific metallo-endoribonuclease involved in late-stage 70S ribosome quality control and in maturation of the 3' terminus of the 16S rRNA. This is Endoribonuclease YbeY from Syntrophomonas wolfei subsp. wolfei (strain DSM 2245B / Goettingen).